Consider the following 367-residue polypeptide: Outer membrane porin C (367 aa).

The N-terminal stretch at 1 to 21 (MKVKVLSLLVPALLVAGAANA) is a signal peptide.

The protein belongs to the Gram-negative porin family. As to quaternary structure, homotrimer.

It is found in the cell outer membrane. Its function is as follows. Forms pores that allow passive diffusion of small molecules across the outer membrane. In Escherichia coli O157:H7, this protein is Outer membrane porin C (ompC).